A 146-amino-acid polypeptide reads, in one-letter code: Hemoglobin subunit beta-1 (146 aa).

In terms of domain architecture, Globin spans histidine 2–histidine 146. Histidine 92 provides a ligand contact to heme b.

Belongs to the globin family. As to quaternary structure, heterotetramer of two alpha chains and two beta chains. Red blood cells.

In terms of biological role, involved in oxygen transport from the lung to the various peripheral tissues. The polypeptide is Hemoglobin subunit beta-1 (Saara hardwickii (Indian spiny-tailed lizard)).